A 338-amino-acid polypeptide reads, in one-letter code: 3-isopropylmalate dehydrogenase (338 aa).

Positions 88, 98, 122, and 212 each coordinate substrate. 3 residues coordinate Mg(2+): Asp212, Asp236, and Asp240. 272–284 (GSAPDIAGQGIAD) is an NAD(+) binding site.

It belongs to the isocitrate and isopropylmalate dehydrogenases family. LeuB type 2 subfamily. In terms of assembly, homodimer. Mg(2+) is required as a cofactor. Mn(2+) serves as cofactor.

The protein resides in the cytoplasm. The enzyme catalyses (2R,3S)-3-isopropylmalate + NAD(+) = 4-methyl-2-oxopentanoate + CO2 + NADH. The protein operates within amino-acid biosynthesis; L-leucine biosynthesis; L-leucine from 3-methyl-2-oxobutanoate: step 3/4. In terms of biological role, catalyzes the oxidation of 3-carboxy-2-hydroxy-4-methylpentanoate (3-isopropylmalate) to 3-carboxy-4-methyl-2-oxopentanoate. The product decarboxylates to 4-methyl-2 oxopentanoate. The sequence is that of 3-isopropylmalate dehydrogenase from Corynebacterium jeikeium (strain K411).